We begin with the raw amino-acid sequence, 436 residues long: Trigger factor (436 aa).

One can recognise a PPIase FKBP-type domain in the interval 161–246 (DDQLNIDFVG…VNSVSEPKLP (86 aa)).

This sequence belongs to the FKBP-type PPIase family. Tig subfamily.

The protein resides in the cytoplasm. The catalysed reaction is [protein]-peptidylproline (omega=180) = [protein]-peptidylproline (omega=0). In terms of biological role, involved in protein export. Acts as a chaperone by maintaining the newly synthesized protein in an open conformation. Functions as a peptidyl-prolyl cis-trans isomerase. The protein is Trigger factor of Pseudomonas fluorescens (strain ATCC BAA-477 / NRRL B-23932 / Pf-5).